We begin with the raw amino-acid sequence, 239 residues long: Transcriptional regulatory protein BtsR (239 aa).

Positions 3-116 constitute a Response regulatory domain; that stretch reads KVLIVDDEPL…RLEKTLHRLR (114 aa). Asp-54 bears the 4-aspartylphosphate mark. Residues 137–239 enclose the HTH LytTR-type domain; that stretch reads IPCTGHSRIY…LKSLKEAIGL (103 aa).

In terms of processing, phosphorylated by BtsS.

Its function is as follows. Member of the two-component regulatory system BtsS/BtsR. BtsR regulates expression of btsT by binding to its promoter region. This is Transcriptional regulatory protein BtsR from Salmonella typhimurium (strain LT2 / SGSC1412 / ATCC 700720).